Reading from the N-terminus, the 43-residue chain is Cytochrome b559 subunit beta (43 aa).

Residues 18–34 (WLAVHTLAIPTVFFLGA) form a helical membrane-spanning segment. Position 22 (H22) interacts with heme.

Belongs to the PsbE/PsbF family. In terms of assembly, heterodimer of an alpha subunit and a beta subunit. PSII is composed of 1 copy each of membrane proteins PsbA, PsbB, PsbC, PsbD, PsbE, PsbF, PsbH, PsbI, PsbJ, PsbK, PsbL, PsbM, PsbT, PsbX, PsbY, PsbZ, Psb30/Ycf12, peripheral proteins PsbO, CyanoQ (PsbQ), PsbU, PsbV and a large number of cofactors. It forms dimeric complexes. Heme b is required as a cofactor.

It localises to the cellular thylakoid membrane. This b-type cytochrome is tightly associated with the reaction center of photosystem II (PSII). PSII is a light-driven water:plastoquinone oxidoreductase that uses light energy to abstract electrons from H(2)O, generating O(2) and a proton gradient subsequently used for ATP formation. It consists of a core antenna complex that captures photons, and an electron transfer chain that converts photonic excitation into a charge separation. The polypeptide is Cytochrome b559 subunit beta (Synechococcus sp. (strain JA-2-3B'a(2-13)) (Cyanobacteria bacterium Yellowstone B-Prime)).